A 186-amino-acid chain; its full sequence is Enhancer of split m7 protein (186 aa).

The 56-residue stretch at 13-68 (YRKVMKPLLERKRRARINKCLDELKDLMAECVAQTGDAKFEKADILEVTVQHLRKL) folds into the bHLH domain. Residues 83 to 116 (FRAGYIRAANEVSRALASLPRVDVAFGTTLMTHL) form the Orange domain. Residues 183–186 (WRPW) carry the WRPW motif motif.

As to quaternary structure, transcription repression requires formation of a complex with a corepressor protein (Groucho). Forms homodimers.

The protein localises to the nucleus. Its function is as follows. Participates in the control of cell fate choice by uncommitted neuroectodermal cells in the embryo. Transcriptional repressor. Binds DNA on N-box motifs: 5'-CACNAG-3'. The protein is Enhancer of split m7 protein of Drosophila melanogaster (Fruit fly).